The chain runs to 134 residues: ATP synthase epsilon chain (134 aa).

It belongs to the ATPase epsilon chain family. F-type ATPases have 2 components, CF(1) - the catalytic core - and CF(0) - the membrane proton channel. CF(1) has five subunits: alpha(3), beta(3), gamma(1), delta(1), epsilon(1). CF(0) has three main subunits: a, b and c.

The protein resides in the cell membrane. Produces ATP from ADP in the presence of a proton gradient across the membrane. The polypeptide is ATP synthase epsilon chain (Alkaliphilus metalliredigens (strain QYMF)).